Reading from the N-terminus, the 97-residue chain is Putative defensin-like protein 227 (97 aa).

The N-terminal stretch at 1-26 (MKWATLFMVSCVLMFFVMNNINEVES) is a signal peptide. Disulfide bonds link Cys35–Cys97, Cys45–Cys76, Cys53–Cys91, and Cys74–Cys93.

Belongs to the DEFL family.

It is found in the secreted. The sequence is that of Putative defensin-like protein 227 (SCRL28) from Arabidopsis thaliana (Mouse-ear cress).